The sequence spans 202 residues: MADS-box transcription factor 33 (202 aa).

The region spanning 1 to 61 (MVRGKVQMRR…GKLHELATNG (61 aa)) is the MADS-box domain. Residues 87-177 (QQVAEQGIFL…QEKVKEQQKL (91 aa)) form the K-box domain.

As to expression, expressed in seedling roots.

It is found in the nucleus. Its function is as follows. Probable transcription factor. This is MADS-box transcription factor 33 (MADS33) from Oryza sativa subsp. japonica (Rice).